The sequence spans 466 residues: Argininosuccinate lyase 1 (466 aa).

This sequence belongs to the lyase 1 family. Argininosuccinate lyase subfamily.

It localises to the cytoplasm. It carries out the reaction 2-(N(omega)-L-arginino)succinate = fumarate + L-arginine. It functions in the pathway amino-acid biosynthesis; L-arginine biosynthesis; L-arginine from L-ornithine and carbamoyl phosphate: step 3/3. The sequence is that of Argininosuccinate lyase 1 from Mesorhizobium japonicum (strain LMG 29417 / CECT 9101 / MAFF 303099) (Mesorhizobium loti (strain MAFF 303099)).